A 160-amino-acid chain; its full sequence is Nucleotide-binding protein VFMJ11_1323 (160 aa).

It belongs to the YajQ family.

In terms of biological role, nucleotide-binding protein. This chain is Nucleotide-binding protein VFMJ11_1323, found in Aliivibrio fischeri (strain MJ11) (Vibrio fischeri).